The chain runs to 324 residues: E3 ubiquitin-protein ligase SIAH2 (324 aa).

Residues 1–15 show a composition bias toward polar residues; it reads MSRPSSTGPSANKPC. The interval 1–42 is disordered; that stretch reads MSRPSSTGPSANKPCSKQPPPQPQHTPSPAAPPAAATISAAG. A Phosphoserine modification is found at serine 6. Position 16 is a phosphoserine; by DYRK2 (serine 16). A compositionally biased stretch (pro residues) spans 17 to 32; that stretch reads KQPPPQPQHTPSPAAP. Threonine 26 bears the Phosphothreonine; by DYRK2 mark. Position 28 is a phosphoserine; by DYRK2 and MAPK14 (serine 28). The segment covering 33–42 has biased composition (low complexity); it reads PAAATISAAG. Serine 68 carries the post-translational modification Phosphoserine; by DYRK2. An RING-type zinc finger spans residues 80 to 115; that stretch reads CPVCFDYVLPPILQCQAGHLVCNQCRQKLSCCPTCR. Position 119 is a phosphothreonine; by DYRK2 (threonine 119). The interval 130 to 322 is SBD; sequence VASAVLFPCK…LGINVTISTC (193 aa). The segment at 133–193 adopts an SIAH-type zinc-finger fold; it reads AVLFPCKYAT…VMSHLMHAHK (61 aa). Zn(2+) is bound by residues cysteine 138, cysteine 145, histidine 157, cysteine 161, cysteine 168, cysteine 175, histidine 187, and histidine 192.

Belongs to the SINA (Seven in absentia) family. In terms of assembly, homodimer. Interacts with UBE2E2. Interacts with PEG3. Interacts with VAV1, without mediating its ubiquitin-mediated degradation. Interacts with CACYBP/SIP. Probable component of some large E3 complex possibly composed of UBE2D1, SIAH2, CACYBP/SIP, SKP1, APC and TBL1X. Interacts with PEG10, which may inhibit its activity. Interacts with EGLN2 and SNCAIP. Interacts with DYRK2. Interacts with NR1D1 and NR1D2. Interacts with DCC. Interacts with AXIN1. In terms of processing, phosphorylated at Ser-28 by MAPK14, which mediates the degradation by the proteasome of EGLN3. Phosphorylated at Ser-28 by DYRK2; this increases the ubiquitin ligase activity and promotes degradation of EGLN3. Widely expressed at low level.

Its subcellular location is the cytoplasm. The protein localises to the nucleus. It catalyses the reaction S-ubiquitinyl-[E2 ubiquitin-conjugating enzyme]-L-cysteine + [acceptor protein]-L-lysine = [E2 ubiquitin-conjugating enzyme]-L-cysteine + N(6)-ubiquitinyl-[acceptor protein]-L-lysine.. Its pathway is protein modification; protein ubiquitination. With respect to regulation, inhibited by interaction with SNCAIP (isoform 2, but not isoform 1). May be inhibited by interaction with PEG10. Functionally, E3 ubiquitin-protein ligase that mediates ubiquitination and subsequent proteasomal degradation of target proteins. E3 ubiquitin ligases accept ubiquitin from an E2 ubiquitin-conjugating enzyme in the form of a thioester and then directly transfers the ubiquitin to targeted substrates. Mediates E3 ubiquitin ligase activity either through direct binding to substrates or by functioning as the essential RING domain subunit of larger E3 complexes. Triggers the ubiquitin-mediated degradation of many substrates, including proteins involved in transcription regulation (GPS2, POU2AF1, PML, NCOR1), a cell surface receptor (DCC), an antiapoptotic protein (BAG1), and a protein involved in synaptic vesicle function in neurons (SYP). Mediates ubiquitination and proteasomal degradation of DYRK2 in response to hypoxia. It is thereby involved in apoptosis, tumor suppression, cell cycle, transcription and signaling processes. Has some overlapping function with SIAH1. Triggers the ubiquitin-mediated degradation of TRAF2, whereas SIAH1 does not. Promotes monoubiquitination of SNCA. Regulates cellular clock function via ubiquitination of the circadian transcriptional repressors NR1D1 and NR1D2 leading to their proteasomal degradation. Plays an important role in mediating the rhythmic degradation/clearance of NR1D1 and NR1D2 contributing to their circadian profile of protein abundance. Mediates ubiquitination and degradation of EGLN2 and EGLN3 in response to the unfolded protein response (UPR), leading to their degradation and subsequent stabilization of ATF4. Also part of the Wnt signaling pathway in which it mediates the Wnt-induced ubiquitin-mediated proteasomal degradation of AXIN1. The protein is E3 ubiquitin-protein ligase SIAH2 (SIAH2) of Homo sapiens (Human).